The primary structure comprises 352 residues: Inorganic triphosphatase (352 aa).

A CYTH domain is found at 6-203 (LQEIELKLAI…KRGYLLGSKQ (198 aa)).

It carries out the reaction triphosphate + H2O = phosphate + diphosphate. Functionally, involved in the hydrolysis of the beta-gamma-phosphoanhydride linkage of triphosphate-containing substrates (inorganic or nucleoside-linked). Catalyzes the hydrolysis of inorganic triphosphate (PPPi), which could be cytotoxic because of its high affinity for calcium ion, thereby interfering with calcium signaling. The protein is Inorganic triphosphatase of Haemophilus influenzae (strain ATCC 51907 / DSM 11121 / KW20 / Rd).